The following is a 377-amino-acid chain: Multiple sugar-binding transport ATP-binding protein MsmK (377 aa).

One can recognise an ABC transporter domain in the interval 4–246; that stretch reads LNLNHIYKKY…PANKFVAGFI (243 aa). 38-45 lines the ATP pocket; that stretch reads GPSGCGKS.

This sequence belongs to the ABC transporter superfamily.

It is found in the cell membrane. Involved in a binding protein-dependent transport system responsible for the uptake of melibiose, raffinose and isomaltotriose. Probably responsible for energy coupling to the transport system. The protein is Multiple sugar-binding transport ATP-binding protein MsmK (msmK) of Streptococcus mutans serotype c (strain ATCC 700610 / UA159).